The following is a 92-amino-acid chain: Small ribosomal subunit protein uS19c (92 aa).

Belongs to the universal ribosomal protein uS19 family.

Its subcellular location is the plastid. Its function is as follows. Protein S19 forms a complex with S13 that binds strongly to the 16S ribosomal RNA. The polypeptide is Small ribosomal subunit protein uS19c (Aneura mirabilis (Parasitic liverwort)).